The primary structure comprises 130 residues: Small ribosomal subunit protein uS9 (130 aa).

Belongs to the universal ribosomal protein uS9 family. In terms of assembly, part of the 30S ribosomal subunit.

This Bacillus subtilis (strain 168) protein is Small ribosomal subunit protein uS9 (rpsI).